We begin with the raw amino-acid sequence, 192 residues long: 7-methyl-GTP pyrophosphatase (192 aa).

Residue D69 is the Proton acceptor of the active site.

This sequence belongs to the Maf family. YceF subfamily. The cofactor is a divalent metal cation.

It localises to the cytoplasm. The enzyme catalyses N(7)-methyl-GTP + H2O = N(7)-methyl-GMP + diphosphate + H(+). Its function is as follows. Nucleoside triphosphate pyrophosphatase that hydrolyzes 7-methyl-GTP (m(7)GTP). May have a dual role in cell division arrest and in preventing the incorporation of modified nucleotides into cellular nucleic acids. The chain is 7-methyl-GTP pyrophosphatase from Methylobacillus flagellatus (strain ATCC 51484 / DSM 6875 / VKM B-1610 / KT).